Reading from the N-terminus, the 634-residue chain is ATP-dependent clpX-like chaperone, mitochondrial (634 aa).

A mitochondrion-targeting transit peptide spans 1–56 (MSSCGACTCGAAAARLLTTSLTSAQRGISCGRIHVPVLGRLGTTLDAQALRRAPLR). The disordered stretch occupies residues 69-102 (DGANKDGSGDGNKKSVTEGSSKKSGSGNSGKGGN). Basic and acidic residues predominate over residues 70–84 (GANKDGSGDGNKKSV). Low complexity predominate over residues 85–94 (TEGSSKKSGS). One can recognise a ClpX-type ZB domain in the interval 94–147 (SGNSGKGGNQLRCPKCGDLCTHVETFVSSTRFVKCEKCHHFFVVLSEADSKKSI). 4 residues coordinate Zn(2+): C106, C109, C128, and C131. An ATP-binding site is contributed by 295 to 302 (PTGSGKTL). Residue K438 is modified to N6-acetyllysine. The segment covering 599–611 (KEPGYIRAPSKES) has biased composition (basic and acidic residues). The tract at residues 599 to 634 (KEPGYIRAPSKESSEEEYDSGVEEDGWPRQADAANS) is disordered. Residues 612–623 (SEEEYDSGVEED) are compositionally biased toward acidic residues. S618 carries the post-translational modification Phosphoserine.

It belongs to the ClpX chaperone family. In terms of assembly, homohexamer that forms a ring structure; this hexamerization requires ATP binding. Component of the ClpXP complex formed by the assembly of two CLPP heptameric rings with two CLPX hexameric rings, giving rise to a symmetrical structure with two central CLPP rings flanked by a CLPX ring at either end of the complex. Interacts with TFAM. As to expression, detected in liver (at protein level).

Its subcellular location is the mitochondrion. The protein localises to the mitochondrion matrix. It localises to the mitochondrion nucleoid. It catalyses the reaction ATP + H2O = ADP + phosphate + H(+). In terms of biological role, ATP-dependent chaperone that functions as an unfoldase. As part of the ClpXP protease complex, it recognizes specific protein substrates, unfolds them using energy derived from ATP hydrolysis, and then translocates them to the proteolytic subunit (CLPP) of the ClpXP complex for degradation. Thanks to its chaperone activity, it also functions in the incorporation of the pyridoxal phosphate cofactor into 5-aminolevulinate synthase, thereby activating 5-aminolevulinate (ALA) synthesis, the first step in heme biosynthesis. This chaperone is also involved in the control of mtDNA nucleoid distribution, by regulating mitochondrial transcription factor A (TFAM) activity. This chain is ATP-dependent clpX-like chaperone, mitochondrial, found in Mus musculus (Mouse).